The following is a 329-amino-acid chain: RNA polymerase sigma factor SigB (329 aa).

The segment covering 1-12 (MTSPSDVEASTE) has biased composition (polar residues). The disordered stretch occupies residues 1-27 (MTSPSDVEASTETVDRGSRRNQTNDNP). Residues 120–133 (DLIQEGNLGLIRAM) carry the Polymerase core binding motif. The segment at residues 290-309 (LDQIGRQFGLSRERVRQIER) is a DNA-binding region (H-T-H motif).

Belongs to the sigma-70 factor family.

Functionally, sigma factors are initiation factors that promote the attachment of RNA polymerase to specific initiation sites and are then released. The chain is RNA polymerase sigma factor SigB (sigB) from Corynebacterium diphtheriae (strain ATCC 700971 / NCTC 13129 / Biotype gravis).